The following is a 557-amino-acid chain: Ribonuclease J 2 (557 aa).

The Zn(2+) site is built by His-76, His-78, His-144, and Glu-166. Substrate is bound at residue 366 to 370 (HASSH).

It belongs to the metallo-beta-lactamase superfamily. RNA-metabolizing metallo-beta-lactamase-like family. Bacterial RNase J subfamily. As to quaternary structure, homodimer, may be a subunit of the RNA degradosome. The cofactor is Zn(2+).

The protein resides in the cytoplasm. An RNase that has 5'-3' exonuclease and possibly endoonuclease activity. Involved in maturation of rRNA and in some organisms also mRNA maturation and/or decay. This Staphylococcus aureus (strain MRSA252) protein is Ribonuclease J 2.